The primary structure comprises 236 residues: Uridylate kinase (236 aa).

11-14 (KFSG) contributes to the ATP binding site. Residue G53 participates in UMP binding. 2 residues coordinate ATP: G54 and R58. UMP is bound by residues D73 and 134-141 (TGSPFFTT). Positions 161, 167, and 170 each coordinate ATP.

The protein belongs to the UMP kinase family. In terms of assembly, homohexamer.

It is found in the cytoplasm. It carries out the reaction UMP + ATP = UDP + ADP. The protein operates within pyrimidine metabolism; CTP biosynthesis via de novo pathway; UDP from UMP (UMPK route): step 1/1. Its activity is regulated as follows. Inhibited by UTP. Catalyzes the reversible phosphorylation of UMP to UDP. This is Uridylate kinase from Hydrogenovibrio crunogenus (strain DSM 25203 / XCL-2) (Thiomicrospira crunogena).